We begin with the raw amino-acid sequence, 226 residues long: Small ribosomal subunit protein uS3 (226 aa).

The 69-residue stretch at 36-104 (IRKYLENRLS…KIQINIFEIK (69 aa)) folds into the KH type-2 domain.

It belongs to the universal ribosomal protein uS3 family. As to quaternary structure, part of the 30S ribosomal subunit. Forms a tight complex with proteins S10 and S14.

Its function is as follows. Binds the lower part of the 30S subunit head. Binds mRNA in the 70S ribosome, positioning it for translation. The sequence is that of Small ribosomal subunit protein uS3 from Karelsulcia muelleri (strain GWSS) (Sulcia muelleri).